Reading from the N-terminus, the 155-residue chain is Ribosomal RNA large subunit methyltransferase H (155 aa).

S-adenosyl-L-methionine is bound by residues Gly-104 and 123–128; that span reads LGPMTF.

Belongs to the RNA methyltransferase RlmH family. Homodimer.

It localises to the cytoplasm. It carries out the reaction pseudouridine(1915) in 23S rRNA + S-adenosyl-L-methionine = N(3)-methylpseudouridine(1915) in 23S rRNA + S-adenosyl-L-homocysteine + H(+). In terms of biological role, specifically methylates the pseudouridine at position 1915 (m3Psi1915) in 23S rRNA. This chain is Ribosomal RNA large subunit methyltransferase H, found in Nitratidesulfovibrio vulgaris (strain DSM 19637 / Miyazaki F) (Desulfovibrio vulgaris).